The sequence spans 41 residues: Replication-associated protein (41 aa).

Functionally, involved in viral RNA replication. The protein is Replication-associated protein of Potato leafroll virus (strain Potato/Scotland/strain 1/1984) (PLrV).